The chain runs to 1452 residues: Arf-GAP with Rho-GAP domain, ANK repeat and PH domain-containing protein 1 (1452 aa).

Residues D6 to P70 enclose the SAM domain. The interval P81–R90 is required for interaction with SH3KBP1. Disordered regions lie at residues H87–R258 and E271–P304. 3 stretches are compositionally biased toward pro residues: residues P92–T104, S154–P167, and P205–L225. Composition is skewed to acidic residues over residues E228–E239 and E271–H286. S232 carries the post-translational modification Phosphoserine. A Phosphotyrosine; by PTK6 modification is found at Y234. Positions P329–V421 constitute a PH 1 domain. Residue S430 is modified to Phosphoserine. In terms of domain architecture, PH 2 spans Q442–A531. A Phosphotyrosine modification is found at Y506. One can recognise an Arf-GAP domain in the interval S537–E662. The C4-type zinc finger occupies C552–C575. Residue S740 is modified to Phosphoserine. The 108-residue stretch at T745–V852 folds into the PH 3 domain. The 186-residue stretch at A956–F1141 folds into the Rho-GAP domain. The region spanning G1174 to S1263 is the Ras-associating domain. Positions G1276–H1398 constitute a PH 4 domain. Phosphoserine is present on residues S1430 and S1437.

As to quaternary structure, interacts with SH3KBP1/CIN85 (via SH3 domains). The interaction is independent of EGF and does not affect ARAP1 GTPase-activating activity but is involved in regulating ubiquitination and endocytic trafficking of EGFR. ARAP1 competes with E3 ubiquitin-protein ligase CBL for binding to SH3KBP1, preventing interaction of CBL with SH3KBP1; this is likely to regulate SH3KBP1-mediated internalization of EGFR. Interacts with TNFRSF10A. Phosphorylated by PTK6 following EGF stimulation which enhances EGFR signaling by delaying EGFR down-regulation; the interaction is mediated by the SH2 domain of PTK6. Phosphorylation promotes association with the Golgi apparatus and endosomes. As to expression, expressed in the retina where it is detected in Mueller glia (at protein level). Also detected in the retinal pigment epithelium (at protein level). Expressed in osteoclasts (at protein level).

It is found in the cytoplasm. Its subcellular location is the golgi apparatus. The protein localises to the trans-Golgi network. It localises to the golgi stack membrane. The protein resides in the cell membrane. It is found in the endosome. Its subcellular location is the multivesicular body. The protein localises to the cell projection. It localises to the ruffle. The protein resides in the podosome. It is found in the early endosome. Its function is as follows. Phosphatidylinositol 3,4,5-trisphosphate-dependent GTPase-activating protein that modulates actin cytoskeleton remodeling by regulating ARF and RHO family members. Activated by phosphatidylinositol 3,4,5-trisphosphate (PtdIns(3,4,5)P3) binding and, to a lesser extent, by phosphatidylinositol 3,4-bisphosphate (PtdIns(3,4)P2) binding. Has a preference for ARF1 and ARF5. Positively regulates the ring size of circular dorsal ruffles and promotes macropinocytosis. Acts as a bridging factor in osteoclasts to control actin and membrane dynamics. Regulates the condensing of osteoclast podosomes into sealing zones which segregate the bone-facing membrane from other membrane domains and are required for osteoclast resorption activity. Also regulates recruitment of the AP-3 complex to endosomal membranes and trafficking of lysosomal membrane proteins to the ruffled membrane border of osteoclasts to modulate bone resorption. Regulates the endocytic trafficking of EGFR. Regulates the incorporation of CD63 and CD9 into multivesicular bodies. Required in the retinal pigment epithelium (RPE) for photoreceptor survival due to its role in promoting RPE phagocytosis. The protein is Arf-GAP with Rho-GAP domain, ANK repeat and PH domain-containing protein 1 of Mus musculus (Mouse).